The primary structure comprises 1216 residues: Apical endosomal glycoprotein (1216 aa).

A signal peptide spans 1 to 21 (MCLPSCLLSIWVLFMAAQSLG). At 22 to 1155 (KTWVPDHCRS…SQGRVAAPVS (1134 aa)) the chain is on the extracellular side. Positions 27 to 54 (DHCRSPTEATCNFVCDCGDCSDEAQCGF) constitute an LDL-receptor class A 1; truncated domain. The MAM 1 domain maps to 62–224 (NTPFTCNFEQ…DDMEFWDCGL (163 aa)). A glycan (N-linked (GlcNAc...) asparagine) is linked at Asn205. The region spanning 229-269 (ARCPLGHHHCQNKACVEPHQLCDGEDNCGDSSDEDPLICSH) is the LDL-receptor class A 2 domain. Intrachain disulfides connect Cys231–Cys243, Cys238–Cys256, and Cys250–Cys267. The 160-residue stretch at 268–427 (SHHMATDFET…DLIMSNHCIL (160 aa)) folds into the MAM 2 domain. N-linked (GlcNAc...) asparagine glycans are attached at residues Asn291, Asn341, and Asn368. One can recognise an LDL-receptor class A 3 domain in the interval 454-491 (RTCDAGHLSCDELCVPPEQLCDFQQHCAEGEDEEKCGT). 3 cysteine pairs are disulfide-bonded: Cys456–Cys467, Cys463–Cys480, and Cys474–Cys489. MAM domains lie at 492-647 (TDFE…DCNP), 654-813 (DQEV…PCWA), 812-973 (WAAK…PCAQ), and 972-1142 (AQPG…HCKQ). Asn639 is a glycosylation site (N-linked (GlcNAc...) asparagine). N-linked (GlcNAc...) asparagine glycosylation is present at Asn839. Residues 1156–1176 (VPVAVGGALLLFLLLLGLGGW) traverse the membrane as a helical segment. The Cytoplasmic segment spans residues 1177–1216 (HWLQKQHLPCQSTDAAASGFDNILFNADQVTLPESITSNP).

In terms of tissue distribution, apical endosomal tubules of developing rat intestinal epithelial cells.

The protein resides in the membrane. Its function is as follows. Probably involved in the sorting and selective transport of receptors and ligands across polarized epithelia. The chain is Apical endosomal glycoprotein (Mamdc4) from Rattus norvegicus (Rat).